The sequence spans 1294 residues: MAKVRAALDRITDPSVKAVLNEEAYSHIRPVLRESLTNNPYAIAPDAADTLEKYGIATNPFAVKVHSHGAVKSIENTLLERVGFNLPKEPCTFLFLKRSKLRYLRRGPSNNDIFINLAIEPRDLQRYEEDTLVESWTRITTRYAYISDTFHFFTRKMLADLFFHNPALDVLYATLVLPPEALHKHPSIEPDLYTINYNFNGFQYIPGNHGGGSYSHEFKQLEWLKVGHLKSPELCLTFQMIESIGANHLFMITRGIKITPRVRTFTKDSYVLFPQIFHPRNLNPSKPFPKVKAMQLFTYVKSVKNPTERDIYAKIRQLIKTSELSDYHPDEIVHIVNYFVFISKLDSINSYSDILSLPIWSKALLPIKTKITQLWEKLTGARAFNQLLDALQWKTFTYPLEVVDSPQPLQTRDCFIEDERLEIDTLEDEIPPNPNDNTSMSPQSIEEAVKNNPDLPWAPWLLILQAHNADCTEKQYDPENNLILPIQEINTLPKHQHPDIPTDLLTLLTKLHREPTTVSLDNHRARAYGSDVKNLRIGALLKKQSKDWLASFALKTENIEREVLMSVIHGAGGSGKSHAIQTWMRSLNRRDRHVTIILPTTDLRNDWTNKVPNLEQANFKTFEKALCQPCGKIIVFDDYSKLPQGYIEAFLAINQNVILAILTGDSKQSFHHESNEDAYTATLEPSIITYQPFCRYYLNITHRNKPDLANKLGVYSCSSGTTSFTMSSQALKGMPILSPSIMKKTALGEMGQKSMTYAGCQGLTTKAVQILLDTNTPLCSSNVIYTALSRAVDHIHFINTGPNSTDFWEKLDSTPYLKTFLDCVREEKMNEIIAAEEPPTPVQAPTTHFPKVNPTTVIESYVHDLPEKHDREIFSETHGHSNAIQTDNPVVQLFPHQQAKDETLYWATIEARLQCTSSEENLKEFHLKHDIGDILFLNYKQAMNLPQDPIPFNPDLWTLCRQEIENTYLKKSAAALVNAATRQSPDFDSHAIALFLKSQWVKKTEKIGCLKIKAGQTIAAFMQQTVMIYGTMARYMRKFRNQYCPRKIFVNCETTPADFNSFILDEWNFNRTCFSNDFTAFDQSQDGSILQFEVIKAKFHNIPEDVIEGYIQIKTHAKIFLGTLSIMRLSGEGPTFDANTEANIAYTHTKFNIPCDAAQVYAGDDMSIDYVASVKPSFNMIEHLMKLKGKPVFNTQTQGDFAEFCGWTISPKGIIKKPEKMNMSIELQKNINKFHEVKRSYALDHAFAYQLGDELHELYNENEAEHHQLATRSLILAGQATALDILDYGLRDLK.

Residues 59–224 (NPFAVKVHSH…SHEFKQLEWL (166 aa)) form the Alphavirus-like MT domain. The 158-residue stretch at 541-698 (LKKQSKDWLA…TYQPFCRYYL (158 aa)) folds into the (+)RNA virus helicase ATP-binding domain. An ATP-binding site is contributed by 570–577 (GAGGSGKS). Positions 699–832 (NITHRNKPDL…CVREEKMNEI (134 aa)) constitute a (+)RNA virus helicase C-terminal domain. Residues 1071-1178 (RTCFSNDFTA…DYVASVKPSF (108 aa)) form the RdRp catalytic domain.

Belongs to the potexvirus/carlavirus RNA replication protein family.

It carries out the reaction RNA(n) + a ribonucleoside 5'-triphosphate = RNA(n+1) + diphosphate. The catalysed reaction is ATP + H2O = ADP + phosphate + H(+). Its function is as follows. RNA replication. The central part of this protein possibly functions as an ATP-binding helicase. The chain is RNA replication protein from Trifolium (WCMV).